Here is a 455-residue protein sequence, read N- to C-terminus: MTFTDWPWRHWRQVRSQAPALRLNDEVLSWRALCERIDVLAGGFAAQGVREGDGVLLRAGNQPRTLLAWLALMQCGARVLPVNPQLPQTLLEALVPKLTLRFALTLEGENAFSGLTALQIQKSTAAYAVAWQPQRLVSMTLTSGSTGLPKAAVHTCQAHLASAQGVLSLMPFGPQDDWLLSLPLFHVSGQGIMWRWLFAGARMTVRDKQPLEQMLAGCTHASLVPTQLWRLLANRAAVTLKAVLLGGAVIPVELTDQASKQGIRCWCGYGLTEFASTVCAKEADGSDDVGAPLPGREIRIVDNEVWLRAASMAEGYWRDGKLIPLVNDEGWFATRDRGELNHGRLTIAGRLDNLFFSGGEGIQPEEVERVINAHPLVQQAFVVPVEDKEFGHRPVAVVEYASQAGDVNLAEWVRDKLARFQQPVRWLTMPSELKNGGIKISRRALQQWVCENCKN.

It belongs to the ATP-dependent AMP-binding enzyme family. MenE subfamily.

It catalyses the reaction 2-succinylbenzoate + ATP + CoA = 2-succinylbenzoyl-CoA + AMP + diphosphate. Its pathway is quinol/quinone metabolism; 1,4-dihydroxy-2-naphthoate biosynthesis; 1,4-dihydroxy-2-naphthoate from chorismate: step 5/7. It participates in quinol/quinone metabolism; menaquinone biosynthesis. Its function is as follows. Converts 2-succinylbenzoate (OSB) to 2-succinylbenzoyl-CoA (OSB-CoA). The polypeptide is 2-succinylbenzoate--CoA ligase (Salmonella typhimurium (strain LT2 / SGSC1412 / ATCC 700720)).